Consider the following 365-residue polypeptide: UDP-N-acetylglucosamine--N-acetylmuramyl-(pentapeptide) pyrophosphoryl-undecaprenol N-acetylglucosamine transferase (365 aa).

UDP-N-acetyl-alpha-D-glucosamine contacts are provided by residues 17–19 (TGG), asparagine 129, arginine 167, serine 194, isoleucine 250, 269–274 (ALTVSE), and glutamine 295.

It belongs to the glycosyltransferase 28 family. MurG subfamily.

It localises to the cell inner membrane. It catalyses the reaction di-trans,octa-cis-undecaprenyl diphospho-N-acetyl-alpha-D-muramoyl-L-alanyl-D-glutamyl-meso-2,6-diaminopimeloyl-D-alanyl-D-alanine + UDP-N-acetyl-alpha-D-glucosamine = di-trans,octa-cis-undecaprenyl diphospho-[N-acetyl-alpha-D-glucosaminyl-(1-&gt;4)]-N-acetyl-alpha-D-muramoyl-L-alanyl-D-glutamyl-meso-2,6-diaminopimeloyl-D-alanyl-D-alanine + UDP + H(+). It participates in cell wall biogenesis; peptidoglycan biosynthesis. Its function is as follows. Cell wall formation. Catalyzes the transfer of a GlcNAc subunit on undecaprenyl-pyrophosphoryl-MurNAc-pentapeptide (lipid intermediate I) to form undecaprenyl-pyrophosphoryl-MurNAc-(pentapeptide)GlcNAc (lipid intermediate II). In Shewanella sediminis (strain HAW-EB3), this protein is UDP-N-acetylglucosamine--N-acetylmuramyl-(pentapeptide) pyrophosphoryl-undecaprenol N-acetylglucosamine transferase.